The primary structure comprises 386 residues: Phosphoglycerate kinase (386 aa).

Substrate-binding positions include 21–23, Arg-36, 59–62, Arg-113, and Arg-146; these read DLN and HLGR. Residues Lys-197, Glu-314, and 340 to 343 contribute to the ATP site; that span reads GGDT.

The protein belongs to the phosphoglycerate kinase family. Monomer.

It is found in the cytoplasm. It catalyses the reaction (2R)-3-phosphoglycerate + ATP = (2R)-3-phospho-glyceroyl phosphate + ADP. Its pathway is carbohydrate degradation; glycolysis; pyruvate from D-glyceraldehyde 3-phosphate: step 2/5. The protein is Phosphoglycerate kinase of Ectopseudomonas mendocina (strain ymp) (Pseudomonas mendocina).